The following is a 187-amino-acid chain: dITP/XTP pyrophosphatase (187 aa).

7–12 (TNNPYK) provides a ligand contact to substrate. The Mg(2+) site is built by glutamate 36 and aspartate 65. Aspartate 65 serves as the catalytic Proton acceptor. Substrate-binding positions include threonine 66, 140-143 (FGYD), lysine 163, and 168-169 (HR).

Belongs to the HAM1 NTPase family. In terms of assembly, homodimer. The cofactor is Mg(2+).

The enzyme catalyses XTP + H2O = XMP + diphosphate + H(+). It catalyses the reaction dITP + H2O = dIMP + diphosphate + H(+). It carries out the reaction ITP + H2O = IMP + diphosphate + H(+). Pyrophosphatase that catalyzes the hydrolysis of nucleoside triphosphates to their monophosphate derivatives, with a high preference for the non-canonical purine nucleotides XTP (xanthosine triphosphate), dITP (deoxyinosine triphosphate) and ITP. Seems to function as a house-cleaning enzyme that removes non-canonical purine nucleotides from the nucleotide pool, thus preventing their incorporation into DNA/RNA and avoiding chromosomal lesions. The chain is dITP/XTP pyrophosphatase from Pyrobaculum aerophilum (strain ATCC 51768 / DSM 7523 / JCM 9630 / CIP 104966 / NBRC 100827 / IM2).